Here is a 141-residue protein sequence, read N- to C-terminus: Putative antirestriction protein YubI (141 aa).

This sequence belongs to the antirestriction protein family.

The chain is Putative antirestriction protein YubI (yubI) from Escherichia coli (strain K12).